Consider the following 133-residue polypeptide: Snaclec purpureotin subunit alpha (133 aa).

3 disulfides stabilise this stretch: C2-C13, C30-C127, and C102-C119. The region spanning 9 to 128 is the C-type lectin domain; the sequence is FKQYCYQIIK…CEQKHIFMCK (120 aa).

The protein belongs to the snaclec family. Homodimer (non-covalently linked) of heterodimer of alpha and beta subunits (disulfide-linked). In terms of tissue distribution, expressed by the venom gland.

Its subcellular location is the secreted. In terms of biological role, snaclec that induces platelet aggregation without any cofactor in a dose-dependent manner. Its platelet aggregation effect is blocked by echicetin, suggesting it is a GPIb-binding protein which binds to the same or a closely related GPIb site on platelets as echicetin. The chain is Snaclec purpureotin subunit alpha from Trimeresurus purpureomaculatus (Mangrove pit viper).